The sequence spans 439 residues: Fibroleukin (439 aa).

The first 23 residues, 1-23 (MKLANWYWLSSAVLATYGFLVVA), serve as a signal peptide directing secretion. A glycan (N-linked (GlcNAc...) asparagine) is linked at Asn25. Residues 73-165 (SRIEEVFKEV…GRLEKLNLVN (93 aa)) are a coiled coil. The segment at 103 to 126 (ADDNGDPGRNGLLLPSTGAPGEVG) is disordered. Residues Asn179, Asn235, Asn263, and Asn336 are each glycosylated (N-linked (GlcNAc...) asparagine). Residues 204–436 (PVQHLIYKDC…EAKMMIRPKH (233 aa)) enclose the Fibrinogen C-terminal domain. Cys213 and Cys242 are disulfide-bonded. Residues Cys371 and Cys384 are joined by a disulfide bond.

Homotetramer; disulfide-linked. As to expression, constitutively expressed in cytotoxic T-cells.

The protein localises to the secreted. May play a role in physiologic lymphocyte functions at mucosal sites. This Homo sapiens (Human) protein is Fibroleukin (FGL2).